The primary structure comprises 64 residues: Prokaryotic ubiquitin-like protein Pup (64 aa).

A compositionally biased stretch (basic and acidic residues) spans 1–11 (MAQEQTKRGGG). Residues 1–36 (MAQEQTKRGGGGDDDDVTDLGGPAGQERREKLAEDT) form a disordered region. Residues 21–58 (GGPAGQERREKLAEDTDDLLDEIDDVLEENAEDFVRAY) are ARC ATPase binding. Residues 24–52 (AGQERREKLAEDTDDLLDEIDDVLEENAE) are a coiled coil. At Gln-64 the chain carries Deamidated glutamine. Gln-64 is covalently cross-linked (Isoglutamyl lysine isopeptide (Gln-Lys) (interchain with K-? in acceptor proteins)).

The protein belongs to the prokaryotic ubiquitin-like protein family. As to quaternary structure, strongly interacts with the proteasome-associated ATPase ARC through a hydrophobic interface; the interacting region of Pup lies in its C-terminal half. There is one Pup binding site per ARC hexamer ring. Is modified by deamidation of its C-terminal glutamine to glutamate by the deamidase Dop, a prerequisite to the subsequent pupylation process.

It functions in the pathway protein degradation; proteasomal Pup-dependent pathway. Functionally, protein modifier that is covalently attached to lysine residues of substrate proteins, thereby targeting them for proteasomal degradation. The tagging system is termed pupylation. The chain is Prokaryotic ubiquitin-like protein Pup from Mycobacteroides abscessus (strain ATCC 19977 / DSM 44196 / CCUG 20993 / CIP 104536 / JCM 13569 / NCTC 13031 / TMC 1543 / L948) (Mycobacterium abscessus).